Consider the following 399-residue polypeptide: Transcription factor UNE10 (399 aa).

2 disordered regions span residues 119 to 158 (QSKPGGVGSTRVGSCSDGRTMGGGKRARVAPEWSGGGSQR) and 173 to 228 (MGSH…RRDK). Over residues 178–201 (NTIDDHDSVCHSRPQMEDEEEKKA) the composition is skewed to basic and acidic residues. The bHLH domain occupies 213-262 (RAAAIHNQSERKRRDKINQRMKTLQKLVPNSSKTDKASMLDEVIEYLKQL).

Homodimer. Associates to PTAC12/HMR/PAP5 which acts as a transcriptional coactivator. Interacts with the Pfr form of phyB but barely with that of phyA. Binds to COP1. In terms of processing, ubiquitinated and subsequently targeted to protein degradation by COP1 in the dark, but not in far-red light. In terms of tissue distribution, mainly expressed in stems, leaves, seedlings, fruits and flowers, and, to a lower extent, in roots.

The protein resides in the nucleus. Its activity is regulated as follows. Stabilized by phyA but destabilized by phyB. Accumulates in the dark but not in far-red light upon MG132 treatment, a 26S proteasome inhibitor (at protein level). Functionally, transcription factor binding to G-box elements (5'-CACGTG-3') in target genes promoters, particularly in far-red light but barely in the dark. Required during the fertilization of ovules by pollen. Repressor of phytochrome A-mediated far-red light responses including seed germination, suppression of hypocotyl elongation, and randomization of hypocotyl growth orientation. Does not inhibit phyB-induced red light responses. In Arabidopsis thaliana (Mouse-ear cress), this protein is Transcription factor UNE10.